We begin with the raw amino-acid sequence, 88 residues long: Small ribosomal subunit protein bS20 (88 aa).

Positions 69–88 (KNTASRKKSRLTKRFNKLTG) are disordered. Basic residues predominate over residues 71–88 (TASRKKSRLTKRFNKLTG).

It belongs to the bacterial ribosomal protein bS20 family.

In terms of biological role, binds directly to 16S ribosomal RNA. This chain is Small ribosomal subunit protein bS20, found in Pelotomaculum thermopropionicum (strain DSM 13744 / JCM 10971 / SI).